The following is a 503-amino-acid chain: tRNA-guanine(15) transglycosylase (503 aa).

Asp-86 functions as the Nucleophile in the catalytic mechanism. A substrate-binding site is contributed by Asp-121. Zn(2+) contacts are provided by Cys-278, Cys-280, and Cys-283.

The protein belongs to the archaeosine tRNA-ribosyltransferase family. Requires Zn(2+) as cofactor.

The catalysed reaction is guanosine(15) in tRNA + 7-cyano-7-deazaguanine = 7-cyano-7-carbaguanosine(15) in tRNA + guanine. It functions in the pathway tRNA modification; archaeosine-tRNA biosynthesis. Functionally, exchanges the guanine residue with 7-cyano-7-deazaguanine (preQ0) at position 15 in the dihydrouridine loop (D-loop) of archaeal tRNAs. The protein is tRNA-guanine(15) transglycosylase of Saccharolobus solfataricus (strain ATCC 35092 / DSM 1617 / JCM 11322 / P2) (Sulfolobus solfataricus).